A 418-amino-acid chain; its full sequence is Inward rectifier potassium channel 16 (418 aa).

Residues methionine 1–aspartate 67 are Cytoplasmic-facing. Residues threonine 68–leucine 94 form a helical membrane-spanning segment. At isoleucine 95–serine 117 the chain is on the extracellular side. An intramembrane region (helical; Pore-forming) is located at residues phenylalanine 118 to tyrosine 134. Residues threonine 131–tyrosine 136 carry the Selectivity filter motif. Residues glycine 135 to cysteine 143 are Extracellular-facing. A helical membrane pass occupies residues serine 144–lysine 171. At methionine 172–methionine 418 the chain is on the cytoplasmic side. Serine 373 and serine 375 each carry phosphoserine.

It belongs to the inward rectifier-type potassium channel (TC 1.A.2.1) family. KCNJ16 subfamily. As to quaternary structure, it forms heteromeric channels with Kir4.1/KCNJ10; this interaction is required for KCNJ16 localization to the basolateral membrane in kidney cells. As a heteromer with KCNJ10, may interact with MAGI1; this interaction may facilitate KCNJ10/KCNJ16 potassium channel expression at the basolateral membrane in kidney cells. May form heteromers with Kir2.1/KCNJ2. Can form heteromeric channels with Kir4.2/KCNJ15. Widely expressed, with highest levels in adult and fetal kidney (at protein level). In the kidney, expressed in the proximal and distal convoluted tubules, but not in glomeruli nor collecting ducts.

The protein localises to the membrane. It localises to the basolateral cell membrane. It catalyses the reaction K(+)(in) = K(+)(out). Channel activity is strongly regulated by variations of cytosolic pH; channels are activated by alkaline and inhibited by acidic pH values. Activated by phosphatidylinositol 4,5 biphosphate (PtdIns(4,5)P2). In terms of biological role, inward rectifier potassium channels are characterized by a greater tendency to allow potassium to flow into the cell rather than out of it. Their voltage dependence is regulated by the concentration of extracellular potassium; as external potassium is raised, the voltage range of the channel opening shifts to more positive voltages. The inward rectification is mainly due to the blockage of outward current by internal magnesium. KCNJ16 may be involved in the regulation of fluid and pH balance. In the kidney, together with KCNJ10, mediates basolateral K(+) recycling in distal tubules; this process is critical for Na(+) reabsorption at the tubules. The protein is Inward rectifier potassium channel 16 (KCNJ16) of Homo sapiens (Human).